Reading from the N-terminus, the 118-residue chain is Large ribosomal subunit protein bL20 (118 aa).

It belongs to the bacterial ribosomal protein bL20 family.

Its function is as follows. Binds directly to 23S ribosomal RNA and is necessary for the in vitro assembly process of the 50S ribosomal subunit. It is not involved in the protein synthesizing functions of that subunit. The sequence is that of Large ribosomal subunit protein bL20 from Thermosipho melanesiensis (strain DSM 12029 / CIP 104789 / BI429).